Reading from the N-terminus, the 370-residue chain is Anhydro-N-acetylmuramic acid kinase (370 aa).

Residue 13–20 (GTSMDGVD) coordinates ATP.

The protein belongs to the anhydro-N-acetylmuramic acid kinase family.

It carries out the reaction 1,6-anhydro-N-acetyl-beta-muramate + ATP + H2O = N-acetyl-D-muramate 6-phosphate + ADP + H(+). Its pathway is amino-sugar metabolism; 1,6-anhydro-N-acetylmuramate degradation. It functions in the pathway cell wall biogenesis; peptidoglycan recycling. Catalyzes the specific phosphorylation of 1,6-anhydro-N-acetylmuramic acid (anhMurNAc) with the simultaneous cleavage of the 1,6-anhydro ring, generating MurNAc-6-P. Is required for the utilization of anhMurNAc either imported from the medium or derived from its own cell wall murein, and thus plays a role in cell wall recycling. The chain is Anhydro-N-acetylmuramic acid kinase from Shewanella denitrificans (strain OS217 / ATCC BAA-1090 / DSM 15013).